A 556-amino-acid polypeptide reads, in one-letter code: Urocanate hydratase (556 aa).

Residues 52–53 (GG), Gln130, 176–178 (GMG), Glu196, Arg201, 242–243 (NA), 263–267 (QTSAH), 273–274 (YL), and Tyr322 contribute to the NAD(+) site. The active site involves Cys410. Residue Gly492 coordinates NAD(+).

This sequence belongs to the urocanase family. It depends on NAD(+) as a cofactor.

The protein localises to the cytoplasm. It carries out the reaction 4-imidazolone-5-propanoate = trans-urocanate + H2O. It participates in amino-acid degradation; L-histidine degradation into L-glutamate; N-formimidoyl-L-glutamate from L-histidine: step 2/3. Catalyzes the conversion of urocanate to 4-imidazolone-5-propionate. The chain is Urocanate hydratase from Shewanella sediminis (strain HAW-EB3).